We begin with the raw amino-acid sequence, 541 residues long: DNA polymerase epsilon subunit B (541 aa).

Belongs to the DNA polymerase epsilon subunit B family. As to quaternary structure, heterotetramer. Consists of four subunits: POL2, DPB2, DPB3 and DPB4.

The protein resides in the nucleus. In terms of biological role, as accessory component of the DNA polymerase epsilon (DNA polymerase II) participates in chromosomal DNA replication. In Cryptococcus neoformans var. neoformans serotype D (strain B-3501A) (Filobasidiella neoformans), this protein is DNA polymerase epsilon subunit B (DPB2).